The chain runs to 1015 residues: Putative ankyrin repeat protein R96 (1015 aa).

The segment covering 1–14 (MSTVKKSSKKKSSK) has biased composition (basic residues). Positions 1–37 (MSTVKKSSKKKSSKKSSSGNESSKKSSPKIVPKHTAK) are disordered. ANK repeat units lie at residues 136–165 (NGHKVLKILVYENDIPSIIALVENGANIDF), 168–201 (APSNILHICASRNYPVLLKYALSRNEIDINAVNI), 202–231 (DGRSPLYLACLYLNKECIKILLDNGADVEV), 340–370 (LGHNAINTSIMFCNNSLIKYFVDKTDLDFQA), 374–403 (NITNPIQMLVNHGYIDYVETILNRNPKIVS), 456–485 (SGYRPIEVAIRYCSIDVIKELLKYNTTIFA), 498–527 (NNNDIISFATQLGRFDVVTYLIQENVQFQL), and 535–564 (TVPTALLIAIVYHRKNFIQFFLELPQITDC).

This is Putative ankyrin repeat protein R96 from Acanthamoeba polyphaga mimivirus (APMV).